The primary structure comprises 306 residues: GTPase Era (306 aa).

Residues 13-181 form the Era-type G domain; sequence YCGFIAIVGR…EKIVRESLHE (169 aa). Residues 21–28 are G1; sequence GRPNVGKS. 21-28 lines the GTP pocket; it reads GRPNVGKS. The G2 stretch occupies residues 47–51; the sequence is QTTRH. The tract at residues 68–71 is G3; that stretch reads DTPG. GTP contacts are provided by residues 68–72 and 130–133; these read DTPGL and NKID. Residues 130 to 133 form a G4 region; sequence NKID. The tract at residues 160 to 162 is G5; the sequence is ISA. The 78-residue stretch at 212-289 folds into the KH type-2 domain; that stretch reads TGDELPYSVT…HLELWVKVKS (78 aa).

This sequence belongs to the TRAFAC class TrmE-Era-EngA-EngB-Septin-like GTPase superfamily. Era GTPase family. As to quaternary structure, monomer.

It is found in the cytoplasm. The protein resides in the cell inner membrane. Its function is as follows. An essential GTPase that binds both GDP and GTP, with rapid nucleotide exchange. Plays a role in 16S rRNA processing and 30S ribosomal subunit biogenesis and possibly also in cell cycle regulation and energy metabolism. The protein is GTPase Era of Pasteurella multocida (strain Pm70).